The chain runs to 310 residues: Methionyl-tRNA formyltransferase (310 aa).

109 to 112 (SLLP) is a binding site for (6S)-5,6,7,8-tetrahydrofolate.

This sequence belongs to the Fmt family.

The catalysed reaction is L-methionyl-tRNA(fMet) + (6R)-10-formyltetrahydrofolate = N-formyl-L-methionyl-tRNA(fMet) + (6S)-5,6,7,8-tetrahydrofolate + H(+). Its function is as follows. Attaches a formyl group to the free amino group of methionyl-tRNA(fMet). The formyl group appears to play a dual role in the initiator identity of N-formylmethionyl-tRNA by promoting its recognition by IF2 and preventing the misappropriation of this tRNA by the elongation apparatus. This is Methionyl-tRNA formyltransferase from Alkaliphilus oremlandii (strain OhILAs) (Clostridium oremlandii (strain OhILAs)).